Reading from the N-terminus, the 490-residue chain is GTPase Der (490 aa).

EngA-type G domains follow at residues 3–166 (PVVA…MEDL) and 203–376 (IKLA…DSST). GTP is bound by residues 9-16 (GRPNVGKS), 56-60 (DTGGI), 118-121 (NKTD), 209-216 (GRPNVGKS), 256-260 (DTAGV), and 321-324 (NKWD). In terms of domain architecture, KH-like spans 377–461 (RRVGTSMLTR…PIRIQFKEGE (85 aa)).

The protein belongs to the TRAFAC class TrmE-Era-EngA-EngB-Septin-like GTPase superfamily. EngA (Der) GTPase family. Associates with the 50S ribosomal subunit.

GTPase that plays an essential role in the late steps of ribosome biogenesis. This is GTPase Der from Escherichia coli O127:H6 (strain E2348/69 / EPEC).